A 374-amino-acid chain; its full sequence is Spore germination protein B3 (374 aa).

The first 19 residues, 1–19, serve as a signal peptide directing secretion; it reads MKTASKFSVMFFMLLALCG. Residue cysteine 20 is the site of N-palmitoyl cysteine attachment. Residue cysteine 20 is the site of S-diacylglycerol cysteine attachment.

Belongs to the GerABKC lipoprotein family.

Its subcellular location is the cell membrane. In terms of biological role, involved in the response to the germinative mixture of L-asparagine, glucose, fructose and potassium ions (AGFK). Cannot stimulate germination in the absence of gerD and gerK gene products (fructose and glucose receptors respectively). This chain is Spore germination protein B3 (gerBC), found in Bacillus subtilis (strain 168).